The sequence spans 1191 residues: DNA-directed RNA polymerase subunit beta (1191 aa).

Positions 1164–1191 (EEEDLQPADALNIAPQPDTEEEPVESFE) are disordered. Residues 1181–1191 (DTEEEPVESFE) are compositionally biased toward acidic residues.

The protein belongs to the RNA polymerase beta chain family. In terms of assembly, the RNAP catalytic core consists of 2 alpha, 1 beta, 1 beta' and 1 omega subunit. When a sigma factor is associated with the core the holoenzyme is formed, which can initiate transcription.

The catalysed reaction is RNA(n) + a ribonucleoside 5'-triphosphate = RNA(n+1) + diphosphate. DNA-dependent RNA polymerase catalyzes the transcription of DNA into RNA using the four ribonucleoside triphosphates as substrates. The chain is DNA-directed RNA polymerase subunit beta from Lysinibacillus sphaericus (strain C3-41).